The following is a 66-amino-acid chain: Potassium channel toxin alpha-KTx 27.3 (66 aa).

Residues 1-17 (MKLMWLLFLCVLAFSIA) form the signal peptide.

This sequence belongs to the short scorpion toxin superfamily. Potassium channel inhibitor family. Alpha-KTx 27 subfamily. In terms of processing, contains 4 disulfide bonds. In terms of tissue distribution, expressed by the venom gland.

The protein resides in the secreted. In Lychas mucronatus (Chinese swimming scorpion), this protein is Potassium channel toxin alpha-KTx 27.3.